We begin with the raw amino-acid sequence, 177 residues long: Peroxiredoxin-2 (177 aa).

Residue Ala2 is modified to N-acetylalanine. The 159-residue stretch at 6–164 folds into the Thioredoxin domain; sequence ARIGKPAPDF…ALRLVQAFQY (159 aa). The active-site Cysteine sulfenic acid (-SOH) intermediate is Cys51. Position 112 is a phosphoserine (Ser112).

It belongs to the peroxiredoxin family. AhpC/Prx1 subfamily. As to quaternary structure, homodimer; disulfide-linked, upon oxidation. 5 homodimers assemble to form a ring-like decamer. Interacts with TIPIN. The enzyme can be inactivated by further oxidation of the cysteine sulfenic acid (C(P)-SOH) to sulphinic acid (C(P)-SO2H) instead of its condensation to a disulfide bond. It can be reactivated by forming a transient disulfide bond with sulfiredoxin SRXN1, which reduces the cysteine sulfinic acid in an ATP- and Mg-dependent manner. Post-translationally, acetylation increases resistance to transition to high molecular-mass complexes. Deacetylated by HDAC6 which decreases reducing activity.

The protein resides in the cytoplasm. It catalyses the reaction a hydroperoxide + [thioredoxin]-dithiol = an alcohol + [thioredoxin]-disulfide + H2O. Its function is as follows. Thiol-specific peroxidase that catalyzes the reduction of hydrogen peroxide and organic hydroperoxides to water and alcohols, respectively. Plays a role in cell protection against oxidative stress by detoxifying peroxides and as sensor of hydrogen peroxide-mediated signaling events. Might participate in the signaling cascades of growth factors and tumor necrosis factor-alpha by regulating the intracellular concentrations of H(2)O(2). In Pongo abelii (Sumatran orangutan), this protein is Peroxiredoxin-2 (PRDX2).